The sequence spans 182 residues: Large ribosomal subunit protein uL5 (182 aa).

This sequence belongs to the universal ribosomal protein uL5 family. Part of the 50S ribosomal subunit; part of the 5S rRNA/L5/L18/L25 subcomplex. Contacts the 5S rRNA and the P site tRNA. Forms a bridge to the 30S subunit in the 70S ribosome.

In terms of biological role, this is one of the proteins that bind and probably mediate the attachment of the 5S RNA into the large ribosomal subunit, where it forms part of the central protuberance. In the 70S ribosome it contacts protein S13 of the 30S subunit (bridge B1b), connecting the 2 subunits; this bridge is implicated in subunit movement. Contacts the P site tRNA; the 5S rRNA and some of its associated proteins might help stabilize positioning of ribosome-bound tRNAs. The sequence is that of Large ribosomal subunit protein uL5 from Leptospira interrogans serogroup Icterohaemorrhagiae serovar copenhageni (strain Fiocruz L1-130).